The sequence spans 150 residues: UPF0756 membrane protein plu2726 (150 aa).

Helical transmembrane passes span 8–28 (LLVL…TVTL), 51–71 (YGLT…IASG), 88–108 (LLAI…VSLM), and 123–143 (VLGV…AGIL).

Belongs to the UPF0756 family.

Its subcellular location is the cell membrane. This Photorhabdus laumondii subsp. laumondii (strain DSM 15139 / CIP 105565 / TT01) (Photorhabdus luminescens subsp. laumondii) protein is UPF0756 membrane protein plu2726.